Consider the following 596-residue polypeptide: Aspartate--tRNA(Asp/Asn) ligase (596 aa).

E175 contributes to the L-aspartate binding site. The interval 199–202 (QQYK) is aspartate. R221 and H454 together coordinate L-aspartate. ATP is bound at residue 221–223 (RDE). Position 488 (E488) interacts with ATP. R495 provides a ligand contact to L-aspartate. 540–543 (GIDR) contributes to the ATP binding site.

This sequence belongs to the class-II aminoacyl-tRNA synthetase family. Type 1 subfamily. Homodimer.

The protein localises to the cytoplasm. The catalysed reaction is tRNA(Asx) + L-aspartate + ATP = L-aspartyl-tRNA(Asx) + AMP + diphosphate. Its function is as follows. Aspartyl-tRNA synthetase with relaxed tRNA specificity since it is able to aspartylate not only its cognate tRNA(Asp) but also tRNA(Asn). Reaction proceeds in two steps: L-aspartate is first activated by ATP to form Asp-AMP and then transferred to the acceptor end of tRNA(Asp/Asn). The polypeptide is Aspartate--tRNA(Asp/Asn) ligase (Mesorhizobium japonicum (strain LMG 29417 / CECT 9101 / MAFF 303099) (Mesorhizobium loti (strain MAFF 303099))).